The following is a 196-amino-acid chain: ATP-dependent Clp protease proteolytic subunit 1 (196 aa).

Ser-96 acts as the Nucleophile in catalysis. His-121 is an active-site residue.

Belongs to the peptidase S14 family. As to quaternary structure, fourteen ClpP subunits assemble into 2 heptameric rings which stack back to back to give a disk-like structure with a central cavity, resembling the structure of eukaryotic proteasomes.

The protein localises to the cytoplasm. The enzyme catalyses Hydrolysis of proteins to small peptides in the presence of ATP and magnesium. alpha-casein is the usual test substrate. In the absence of ATP, only oligopeptides shorter than five residues are hydrolyzed (such as succinyl-Leu-Tyr-|-NHMec, and Leu-Tyr-Leu-|-Tyr-Trp, in which cleavage of the -Tyr-|-Leu- and -Tyr-|-Trp bonds also occurs).. Its function is as follows. Cleaves peptides in various proteins in a process that requires ATP hydrolysis. Has a chymotrypsin-like activity. Plays a major role in the degradation of misfolded proteins. The chain is ATP-dependent Clp protease proteolytic subunit 1 from Prochlorococcus marinus (strain NATL2A).